A 406-amino-acid polypeptide reads, in one-letter code: Cysteine desulfurase (406 aa).

Lys-226 is modified (N6-(pyridoxal phosphate)lysine). Cys-364 (cysteine persulfide intermediate) is an active-site residue.

The protein belongs to the class-V pyridoxal-phosphate-dependent aminotransferase family. Csd subfamily. As to quaternary structure, homodimer. Interacts with SufE and the SufBCD complex composed of SufB, SufC and SufD. The interaction with SufE is required to mediate the direct transfer of the sulfur atom from the S-sulfanylcysteine. Requires pyridoxal 5'-phosphate as cofactor.

It is found in the cytoplasm. The catalysed reaction is (sulfur carrier)-H + L-cysteine = (sulfur carrier)-SH + L-alanine. The enzyme catalyses L-selenocysteine + AH2 = hydrogenselenide + L-alanine + A + H(+). It functions in the pathway cofactor biosynthesis; iron-sulfur cluster biosynthesis. Its function is as follows. Cysteine desulfurases mobilize the sulfur from L-cysteine to yield L-alanine, an essential step in sulfur metabolism for biosynthesis of a variety of sulfur-containing biomolecules. Component of the suf operon, which is activated and required under specific conditions such as oxidative stress and iron limitation. Acts as a potent selenocysteine lyase in vitro, that mobilizes selenium from L-selenocysteine. Selenocysteine lyase activity is however unsure in vivo. The chain is Cysteine desulfurase from Escherichia coli O127:H6 (strain E2348/69 / EPEC).